A 748-amino-acid polypeptide reads, in one-letter code: Catalase-peroxidase (748 aa).

A cross-link (tryptophyl-tyrosyl-methioninium (Trp-Tyr) (with M-268)) is located at residues 91 to 242; it reads WHSAGTYRIG…LAAVQMGLIY (152 aa). The active-site Proton acceptor is histidine 92. Positions 194 to 223 are disordered; the sequence is DRYGKGKGSSSQGEIPADAHRHGQEQARTA. The tryptophyl-tyrosyl-methioninium (Tyr-Met) (with W-91) cross-link spans 242 to 268; that stretch reads YVNPEGPEGNPDPLAAAHDIRETFARM. Histidine 283 contacts heme b. Residues 288–310 form a disordered region; it reads THGAGDAKHVGREPEGEDMDSQG. Residues 290–301 are compositionally biased toward basic and acidic residues; sequence GAGDAKHVGREP.

The protein belongs to the peroxidase family. Peroxidase/catalase subfamily. Homodimer or homotetramer. It depends on heme b as a cofactor. In terms of processing, formation of the three residue Trp-Tyr-Met cross-link is important for the catalase, but not the peroxidase activity of the enzyme.

The enzyme catalyses H2O2 + AH2 = A + 2 H2O. It catalyses the reaction 2 H2O2 = O2 + 2 H2O. Bifunctional enzyme with both catalase and broad-spectrum peroxidase activity. In Herbaspirillum seropedicae, this protein is Catalase-peroxidase.